We begin with the raw amino-acid sequence, 695 residues long: Amphiphysin (695 aa).

Coiled-coil stretches lie at residues 10 to 83 (AKNV…SLHE) and 144 to 191 (DYDS…QEEL). In terms of domain architecture, BAR spans 24–240 (VLQKLGKADE…MTKLGDQHAD (217 aa)). 2 disordered regions span residues 244–312 (TIQG…VTPT) and 486–617 (GAPG…EASQ). Serine 252 carries the post-translational modification Phosphoserine. Threonine 260 is subject to Phosphothreonine. The segment covering 261 to 274 (PSPPEEPSPLPSPT) has biased composition (pro residues). Phosphoserine occurs at positions 262, 268, 272, and 276. Threonine 280 is subject to Phosphothreonine. A phosphoserine mark is found at serine 506 and serine 638. The SH3 domain maps to 622 to 695 (GFLYKVETLH…FPENFTRRLD (74 aa)).

As to quaternary structure, heterodimer with BIN1. Binds SH3GLB1. Interacts with REPS1 and SGIP1. Binds AP2A2. Interacts with AP2B1. Interacts with DNM1 and SYNJ1. As to expression, neurons, certain endocrine cell types and spermatocytes.

It is found in the cytoplasmic vesicle. The protein resides in the secretory vesicle. Its subcellular location is the synaptic vesicle membrane. It localises to the cytoplasm. The protein localises to the cytoskeleton. Functionally, may participate in mechanisms of regulated exocytosis in synapses and certain endocrine cell types. May control the properties of the membrane associated cytoskeleton. In Homo sapiens (Human), this protein is Amphiphysin (AMPH).